Here is a 131-residue protein sequence, read N- to C-terminus: Small ribosomal subunit protein uS11 (131 aa).

This sequence belongs to the universal ribosomal protein uS11 family. Part of the 30S ribosomal subunit. Interacts with proteins S7 and S18. Binds to IF-3.

Functionally, located on the platform of the 30S subunit, it bridges several disparate RNA helices of the 16S rRNA. Forms part of the Shine-Dalgarno cleft in the 70S ribosome. The sequence is that of Small ribosomal subunit protein uS11 from Neisseria gonorrhoeae (strain ATCC 700825 / FA 1090).